An 876-amino-acid polypeptide reads, in one-letter code: Alanine--tRNA ligase (876 aa).

Zn(2+) is bound by residues His568, His572, Cys670, and His674.

The protein belongs to the class-II aminoacyl-tRNA synthetase family. Requires Zn(2+) as cofactor.

It is found in the cytoplasm. It carries out the reaction tRNA(Ala) + L-alanine + ATP = L-alanyl-tRNA(Ala) + AMP + diphosphate. Functionally, catalyzes the attachment of alanine to tRNA(Ala) in a two-step reaction: alanine is first activated by ATP to form Ala-AMP and then transferred to the acceptor end of tRNA(Ala). Also edits incorrectly charged Ser-tRNA(Ala) and Gly-tRNA(Ala) via its editing domain. The protein is Alanine--tRNA ligase of Geobacter metallireducens (strain ATCC 53774 / DSM 7210 / GS-15).